An 853-amino-acid chain; its full sequence is MSLSPDLPPSEEQNLEIQGSATNCYSVVIIEEQDDTFNDQPFYCEMCQQHFIDQCETHGPPSFTCDSPAALGTPQRALLTLPQGLVIGRSSISHAGLGVFNQGQTVPLGMHFGPFDGEEISEEKALDSANSWVICRGNNQYSYIDAEKDTHSNWMKFVVCSRSETEQNLVAFQQNGRILFRCCRPISPGQEFRVWYAEEYAQGLGAIWDKIWDNKCISQGSTEEQATQNCPCPFCHYSFPTLVYLHAHVKRTHPNEYAQFTQTHPLESEAHTPITEVEQCLVASDEALSTQTQPVTESPQEQISTQNGQPIHQTENSDEPDASDIYTAAGEISDEIHACVDCGRSFLRSCHLKRHQRTIHSKEKPYCCSQCKKCFSQATGLKRHQHTHQEQEKNIESPDRPSDIYPCTKCTLSFVAKINLHQHLKRHHHGEYLRLVESGSLTAETEEDHTEVCFDKQDPNYEPPSRGRKSTKNSLKGRGCPKKVAVGRPRGRPPKNKNLEVEVQKISPICTNCEQSFSDLETLKTHQCPRRDDEGDNVEHPQEASQYICGECIRAFSNLDLLKAHECIQQGEGSYCCPHCDLYFNRMCNLRRHERTIHSKEKPYCCTVCLKSFTQSSGLKRHQQSHLRRKSHRQSSALFTAAIFPCAYCPFSFTDERYLYKHIRRHHPEMSLKYLSFQEGGVLSVEKPHSCSQCCKSFSTIKGFKNHSCFKQGEKVYLCPDCGKAFSWFNSLKQHQRIHTGEKPYTCSQCGKSFVHSGQLNVHLRTHTGEKPFLCSQCGESFRQSGDLRRHEQKHSGVRPCQCPDCGKSFSRPQSLKAHQQLHVGTKLFPCTQCGKSFTRRYHLTRHHQKMHS.

The SET domain occupies 83–197 (QGLVIGRSSI…PGQEFRVWYA (115 aa)). Substrate-binding positions include 127–133 (DSANSWV) and Tyr196. Residues 230-253 (CPCPFCHYSFPTLVYLHAHVKRTH) form a C2H2-type 1 zinc finger. Cys235 is a binding site for Zn(2+). 275–277 (TEV) contacts S-adenosyl-L-methionine. A compositionally biased stretch (polar residues) spans 291 to 314 (QTQPVTESPQEQISTQNGQPIHQT). The disordered stretch occupies residues 291–322 (QTQPVTESPQEQISTQNGQPIHQTENSDEPDA). 3 C2H2-type zinc fingers span residues 337–360 (HACV…RTIH), 366–388 (YCCS…QHTH), and 405–428 (YPCT…KRHH). 341 to 342 (DC) serves as a coordination point for S-adenosyl-L-methionine. Zn(2+) contacts are provided by Cys407, Cys410, His423, and His428. The interval 447-496 (EDHTEVCFDKQDPNYEPPSRGRKSTKNSLKGRGCPKKVAVGRPRGRPPKN) is disordered. A compositionally biased stretch (basic and acidic residues) spans 450-459 (TEVCFDKQDP). A C2H2-type 5; degenerate zinc finger spans residues 508-528 (PICTNCEQSFSDLETLKTHQC). The segment at 547 to 569 (YICGECIRAFSNLDLLKAHECIQ) adopts a C2H2-type 6; degenerate zinc-finger fold. 3 consecutive C2H2-type zinc fingers follow at residues 575–598 (YCCP…RTIH), 604–626 (YCCT…QQSH), and 644–666 (FPCA…IRRH). A C2H2-type 10; degenerate zinc finger spans residues 689-711 (HSCSQCCKSFSTIKGFKNHSCFK). 5 C2H2-type zinc fingers span residues 717 to 739 (YLCP…QRIH), 745 to 767 (YTCS…LRTH), 773 to 795 (FLCS…EQKH), 801 to 823 (CQCP…QQLH), and 829 to 852 (FPCT…QKMH). Residues Cys747, Cys750, His763, His767, Cys775, Cys778, His791, His795, Cys803, Cys806, His819, His823, Cys831, Cys834, and His847 each contribute to the Zn(2+) site. Positions 755 to 845 (VHSGQLNVHL…KSFTRRYHLT (91 aa)) are DNA-binding.

It belongs to the class V-like SAM-binding methyltransferase superfamily. As to quaternary structure, homodimer. Mono-methylated; automethylated. Tri-methylated; automethylated.

The protein resides in the nucleus. It is found in the chromosome. The catalysed reaction is L-lysyl-[protein] + S-adenosyl-L-methionine = N(6)-methyl-L-lysyl-[protein] + S-adenosyl-L-homocysteine + H(+). It catalyses the reaction N(6)-methyl-L-lysyl-[protein] + S-adenosyl-L-methionine = N(6),N(6)-dimethyl-L-lysyl-[protein] + S-adenosyl-L-homocysteine + H(+). It carries out the reaction L-lysyl(4)-[histone H3] + 3 S-adenosyl-L-methionine = N(6),N(6),N(6)-trimethyl-L-lysyl(4)-[histone H3] + 3 S-adenosyl-L-homocysteine + 3 H(+). The enzyme catalyses L-lysyl(36)-[histone H3] + 3 S-adenosyl-L-methionine = N(6),N(6),N(6)-trimethyl-L-lysyl(36)-[histone H3] + 3 S-adenosyl-L-homocysteine + 3 H(+). The catalysed reaction is L-lysyl(9)-[histone H3] + 3 S-adenosyl-L-methionine = N(6),N(6),N(6)-trimethyl-L-lysyl(9)-[histone H3] + 3 S-adenosyl-L-homocysteine + 3 H(+). It catalyses the reaction L-lysyl(20)-[histone H4] + S-adenosyl-L-methionine = N(6)-methyl-L-lysyl(20)-[histone H4] + S-adenosyl-L-homocysteine + H(+). It carries out the reaction N(6)-methyl-L-lysyl(20)-[histone H4] + S-adenosyl-L-methionine = N(6),N(6)-dimethyl-L-lysyl(20)-[histone H4] + S-adenosyl-L-homocysteine + H(+). Histone methyltransferase that sequentially mono-, di-, and tri-methylates both 'Lys-4' (H3K4) and 'Lys-36' (H3K36) of histone H3 to produce respectively trimethylated 'Lys-4' (H3K4me3) and trimethylated 'Lys-36' (H3K36me3) histone H3 and plays a key role in meiotic prophase by determining hotspot localization thereby promoting meiotic recombination. Can also methylate all four core histones with H3 being the best substrate and the most highly modified. Is also able, on one hand, to mono and di-methylate H4K20 and on other hand to trimethylate H3K9 with the di-methylated H3K9 as the best substrate. During meiotic prophase, binds specific DNA sequences through its zinc finger domains thereby determining hotspot localization where it promotes local H3K4me3 and H3K36me3 enrichment on the same nucleosomes through its histone methyltransferase activity. Thereby promotes double-stranded breaks (DSB) formation, at this subset of PRDM9-binding sites, that initiates meiotic recombination for the proper meiotic progression. During meiotic progression hotspot-bound PRDM9 interacts with several complexes; in early leptonema binds CDYL and EHMT2 followed by EWSR1 and CXXC1 by the end of leptonema. EWSR1 joins PRDM9 with the chromosomal axis through REC8. In this way, controls the DSB repair pathway, pairing of homologous chromosomes and sex body formation. Moreover plays a central role in the transcriptional activation of genes during early meiotic prophase thanks to H3K4me3 and H3K36me3 enrichment that represents a specific tag for epigenetic transcriptional activation. In addition performs automethylation. Acetylation and phosphorylation of histone H3 attenuate or prevent histone H3 methylation. This is Histone-lysine N-methyltransferase PRDM9 (prdm9) from Danio rerio (Zebrafish).